The sequence spans 210 residues: Thymidylate kinase (210 aa).

10–17 is an ATP binding site; it reads GLEGAGKS.

This sequence belongs to the thymidylate kinase family.

It carries out the reaction dTMP + ATP = dTDP + ADP. Phosphorylation of dTMP to form dTDP in both de novo and salvage pathways of dTTP synthesis. The chain is Thymidylate kinase (tmk) from Haemophilus influenzae (strain ATCC 51907 / DSM 11121 / KW20 / Rd).